The following is a 503-amino-acid chain: Probable cytosol aminopeptidase (503 aa).

Mn(2+)-binding residues include Lys274 and Asp279. Residue Lys286 is part of the active site. Asp297, Asp356, and Glu358 together coordinate Mn(2+). The active site involves Arg360.

The protein belongs to the peptidase M17 family. Mn(2+) is required as a cofactor.

The protein localises to the cytoplasm. It catalyses the reaction Release of an N-terminal amino acid, Xaa-|-Yaa-, in which Xaa is preferably Leu, but may be other amino acids including Pro although not Arg or Lys, and Yaa may be Pro. Amino acid amides and methyl esters are also readily hydrolyzed, but rates on arylamides are exceedingly low.. It carries out the reaction Release of an N-terminal amino acid, preferentially leucine, but not glutamic or aspartic acids.. Presumably involved in the processing and regular turnover of intracellular proteins. Catalyzes the removal of unsubstituted N-terminal amino acids from various peptides. The chain is Probable cytosol aminopeptidase from Burkholderia lata (strain ATCC 17760 / DSM 23089 / LMG 22485 / NCIMB 9086 / R18194 / 383).